The following is a 277-amino-acid chain: MGSQQAAVSFLSNLAKAAFGLGTAATVLNTSLFTVDGGERAVIFDRFRGVMDQTVGEGTHFLIPILQRPHIFDIRTKPHTFSSISGTKDLQMVNLTLRVLSRPEVSRLPYIFQTLGLEYDEKVLPSIGNEVLKAVVAQFNADQLLTERPHVSALVRESLITRAKDFNIVLDDVAITHLSYGVEFSRAVEQKQVAQQEAERSKFVVMKADQERRAAVIRAEGESEAAQLISDATAKAGMGLIELRRIEASREIASTLARSPNVAYLPGGQSMLFALNR.

At G2 the chain carries N-acetylglycine. The Mitochondrial matrix segment spans residues 2–6 (GSQQA). Residues 7-28 (AVSFLSNLAKAAFGLGTAATVL) traverse the membrane as a helical; Signal-anchor for type II membrane protein segment. Residues 29-277 (NTSLFTVDGG…GQSMLFALNR (249 aa)) are Mitochondrial intermembrane-facing.

Belongs to the prohibitin family. As to quaternary structure, component of a prohibitin multimeric complex in mitochondrial membranes. Mostly expressed in proliferative tissues, including vasculature, shoot and root apical tissues. Expressed in roots, stems, leaves and flowers (at protein level).

It is found in the cell membrane. The protein resides in the mitochondrion inner membrane. The protein localises to the nucleus. It localises to the cytoplasm. Prohibitin probably acts as a holdase/unfoldase for the stabilization of newly synthesized mitochondrial proteins. Necessary for mitochondrial and cell metabolism and biogenesis. Required to regulate the ethylene-mediated signaling; involved in growth maintenance in the presence of ethylene. Functions in nitric oxide (NO)-mediated responses and in hydrogen peroxide-induced NO accumulation. The protein is Prohibitin-3, mitochondrial (PHB3) of Arabidopsis thaliana (Mouse-ear cress).